Reading from the N-terminus, the 302-residue chain is MKRGNEENNHKTSSSSSTQRLSRRKISAGEKSGNVNIPLDLTVEILKKLPAKSLLRFQCVSKQWLSIISSRRDFIDSIVTRSLTQPPPRDIKLIFHHQVLYPGPHFFIFSSTYPQNTDKESLTTRASSYHYVRGLICCWSHCPTTVDIYNPTTRQYYTVPDTNRYQYIETCFFGYDPVENQYKVMVLPKYYMEESPCQVFTVGDPIEKPWRDIQGIGVHFLLKDAVCINGVIYYQATNEYGSTYFLVSFDVRSEKFNHVKAPKILTDHPCTLINYQGKLGLIMCCKKGLEIWVMEDAEKKQD.

The segment covering 1-10 (MKRGNEENNH) has biased composition (basic and acidic residues). Positions 1 to 27 (MKRGNEENNHKTSSSSSTQRLSRRKIS) are disordered. Residues 31–78 (KSGNVNIPLDLTVEILKKLPAKSLLRFQCVSKQWLSIISSRRDFIDSI) form the F-box domain.

In Arabidopsis thaliana (Mouse-ear cress), this protein is Putative F-box protein At1g32420.